A 159-amino-acid chain; its full sequence is SsrA-binding protein (159 aa).

It belongs to the SmpB family.

The protein localises to the cytoplasm. Functionally, required for rescue of stalled ribosomes mediated by trans-translation. Binds to transfer-messenger RNA (tmRNA), required for stable association of tmRNA with ribosomes. tmRNA and SmpB together mimic tRNA shape, replacing the anticodon stem-loop with SmpB. tmRNA is encoded by the ssrA gene; the 2 termini fold to resemble tRNA(Ala) and it encodes a 'tag peptide', a short internal open reading frame. During trans-translation Ala-aminoacylated tmRNA acts like a tRNA, entering the A-site of stalled ribosomes, displacing the stalled mRNA. The ribosome then switches to translate the ORF on the tmRNA; the nascent peptide is terminated with the 'tag peptide' encoded by the tmRNA and targeted for degradation. The ribosome is freed to recommence translation, which seems to be the essential function of trans-translation. In Mycobacteroides abscessus (strain ATCC 19977 / DSM 44196 / CCUG 20993 / CIP 104536 / JCM 13569 / NCTC 13031 / TMC 1543 / L948) (Mycobacterium abscessus), this protein is SsrA-binding protein.